Reading from the N-terminus, the 357-residue chain is Probable dual-specificity RNA methyltransferase RlmN (357 aa).

The Proton acceptor role is filled by Glu-92. Positions 98-330 constitute a Radical SAM core domain; it reads QEYGLSVCVT…KKNGINCVIR (233 aa). Residues Cys-105 and Cys-341 are joined by a disulfide bond. [4Fe-4S] cluster contacts are provided by Cys-112, Cys-116, and Cys-119. S-adenosyl-L-methionine is bound by residues 164–165, Ser-196, 219–221, and Asn-297; these read GE and SLH. The active-site S-methylcysteine intermediate is the Cys-341.

Belongs to the radical SAM superfamily. RlmN family. It depends on [4Fe-4S] cluster as a cofactor.

The protein resides in the cytoplasm. It carries out the reaction adenosine(2503) in 23S rRNA + 2 reduced [2Fe-2S]-[ferredoxin] + 2 S-adenosyl-L-methionine = 2-methyladenosine(2503) in 23S rRNA + 5'-deoxyadenosine + L-methionine + 2 oxidized [2Fe-2S]-[ferredoxin] + S-adenosyl-L-homocysteine. The enzyme catalyses adenosine(37) in tRNA + 2 reduced [2Fe-2S]-[ferredoxin] + 2 S-adenosyl-L-methionine = 2-methyladenosine(37) in tRNA + 5'-deoxyadenosine + L-methionine + 2 oxidized [2Fe-2S]-[ferredoxin] + S-adenosyl-L-homocysteine. Specifically methylates position 2 of adenine 2503 in 23S rRNA and position 2 of adenine 37 in tRNAs. This chain is Probable dual-specificity RNA methyltransferase RlmN, found in Enterococcus faecalis (strain ATCC 700802 / V583).